The sequence spans 424 residues: O-methyltransferase bfoD (424 aa).

Asp-275 contributes to the S-adenosyl-L-methionine binding site. The Proton acceptor role is filled by His-326.

It belongs to the class I-like SAM-binding methyltransferase superfamily. Cation-independent O-methyltransferase family.

Its pathway is secondary metabolite biosynthesis. Cytochrome P450 monooxygenase; part of the gene cluster that mediates the biosynthesis of bifonsecin B, a dimeric gamma-naphthopyrone. The first step in the biosynthesis of bifonsecin B is the production of gamma-naphthopyrone precursor YWA1 by the non-reducing polyketide synthase albA, via condensation of one acetyl-CoA starter unit with 6 malonyl-CoA units. YWA1 is then methylated by bfoE at position C-6 to yield foncesin which is further methylated at position C-8 by bfoD to produce fonsecin B. A key enzyme in the biosynthetic pathway is the cytochrome P450 monooxygenase bfoB which catalyzes the oxidative dimerization of fonsecin B to bifonsecin B. Bfob also catalyzes the oxidative dimerization of rubrofusarin B into nigerone. The stereoselectivity of bfoB is influenced by the two natural monomeric substrates; homodimerization of fonsecin B yields a stereochemically pure biaryl, M-foncerine B, while rubrofusarin B yields a mixture of enantiomers M- and P-nigerone. This Aspergillus brasiliensis (strain CBS 101740 / IMI 381727 / IBT 21946) protein is O-methyltransferase bfoD.